The sequence spans 411 residues: Serine hydroxymethyltransferase (411 aa).

120-122 is a (6S)-5,6,7,8-tetrahydrofolate binding site; sequence GHL. Lysine 225 carries the post-translational modification N6-(pyridoxal phosphate)lysine. (6S)-5,6,7,8-tetrahydrofolate is bound at residue 350-352; sequence SPF.

Belongs to the SHMT family. Homodimer. Pyridoxal 5'-phosphate serves as cofactor.

The protein localises to the cytoplasm. It catalyses the reaction (6R)-5,10-methylene-5,6,7,8-tetrahydrofolate + glycine + H2O = (6S)-5,6,7,8-tetrahydrofolate + L-serine. It functions in the pathway one-carbon metabolism; tetrahydrofolate interconversion. Its pathway is amino-acid biosynthesis; glycine biosynthesis; glycine from L-serine: step 1/1. Its function is as follows. Catalyzes the reversible interconversion of serine and glycine with tetrahydrofolate (THF) serving as the one-carbon carrier. This reaction serves as the major source of one-carbon groups required for the biosynthesis of purines, thymidylate, methionine, and other important biomolecules. Also exhibits THF-independent aldolase activity toward beta-hydroxyamino acids, producing glycine and aldehydes, via a retro-aldol mechanism. In Lactobacillus acidophilus (strain ATCC 700396 / NCK56 / N2 / NCFM), this protein is Serine hydroxymethyltransferase.